The following is a 318-amino-acid chain: MSVDQTLYSRTPTAMADPTCAGPAAFTAAGAFSQPDLMAFSLREEEPIWGFDTIAPSMASWQGKMEQQTFCNPNMERGLKNTHVRNGQPTPPPFDDKKLQTPMGEMYPVAQYAFNSSPPEYAPPKHRSSLSEQSQTDGYGVSTRRRKASAIDQCEQQQEREKREKFLERNRLAASKCRQKKKEHTKLLETRFREVSNKKGELESEIEHLRSEVLNLKNEMLRHAQCGDEAIKIHLAQMVRLITSKDTPNRDLVSPMRSPEQMAASTPHGLSFGFDGPMQLPSEMGSPLDQRRDSEQSIMTESSYTFSTDDSFEELINV.

Residues 114–157 (FNSSPPEYAPPKHRSSLSEQSQTDGYGVSTRRRKASAIDQCEQQ) form a disordered region. Positions 160–199 (REKREKFLERNRLAASKCRQKKKEHTKLLETRFREVSNKK) are basic motif. The bZIP domain occupies 160 to 223 (REKREKFLER…LNLKNEMLRH (64 aa)). The segment at 202-216 (LESEIEHLRSEVLNL) is leucine-zipper. Positions 275–301 (DGPMQLPSEMGSPLDQRRDSEQSIMTE) are disordered.

The protein belongs to the bZIP family. ATF subfamily.

Its subcellular location is the nucleus. Functionally, transcription factor that acts as a key player in the regulatory circuit that integrates secondary metabolism and cellular response to oxidative stress. Regulates the genes involved in development and stress response through direct binding to their promoters. Particularly involved in the resistance to oxidative stress in asexual conidiospores. This Aspergillus oryzae (strain ATCC 42149 / RIB 40) (Yellow koji mold) protein is Basic leucine zipper (bZIP) transcription factor atfB.